The sequence spans 586 residues: MELCGNVMTNSKYEMFRLKCLYCSIESELKDWELFIVHVKSAHYCEDEDVRINEIKEDTEELYSVVDAADPAIAYGPDEFFEVIENSNGVDQWMEADSKDIQYEEDATAWSAATNNSWEFGPGGSSLELPAGKEVTQMDESSQNHIPLNTDDDDVDCSDFFMSEDDLAPPRKPGRPPRRTRPGQVFKFKVSFIRSNPRVLHLIQAYKEHPCLWNPSDEHYQDEPARSMAYEAIMERMDRKANVLFTVEELKKTLEQLHVQYTLALETKQRGKLVGLAARYFAKCEFLSVAPVVTPRENEEDNDLTAIKLNFKEENLITTSFIETYANYPVLYNQALPDFGSIEIRADAFKRMAKEFQPVVKANETDVYIAVNKLRRWLYDAIRRLKSKELIQKCSKQEVQYLQMCSFLPAKGSESQVLYCDYCDKRFHGDYNLRVHIVKAHEVGDLPYLCSFCPRRFDRHVDMDRHKLRSHFERKLKCQYCEKSFAVDTDLKVHTLIHTGERPHVCDICGKTFRLKLLLDHHVNGVHLNIRPYSCNMCTKTFRKKFELANHIKGHLNIRDKKCEYCDATFYDHSSLSRHRRSHRSE.

The segment at Phe-161–Arg-194 is involved in interaction with Cp190. Residues His-201 to Val-292 constitute a DNA-binding region (MADF 1). An involved in interaction with Cp190 region spans residues Thr-294–Thr-319. A DNA-binding region (MADF 2) is located at residues Ser-320–Ser-413. 6 consecutive C2H2-type zinc fingers follow at residues Leu-418–His-441, Tyr-448–His-471, Leu-476–His-498, His-504–His-527, Tyr-533–His-555, and Lys-561–His-583.

Interacts (via regions flanking MADF domain 1) with Cp190 (via regions between the BTB domain and first zinc finger domain); the interaction is probably direct and is essential for protein function.

It localises to the nucleus. It is found in the chromosome. The protein localises to the nucleoplasm. Chromatin-binding protein involved in the organization of active promoters and insulators. Essential for the activity of heterochromatin promoters; primarily binds to specific motifs within promoters of housekeeping genes. May also associate to a lesser extent with promoters in euchromatin. Mediates recruitment of Cp190, a multifunctional protein involved in the recruitment of transcription complexes, the creation of open chromatin regions and the activity of insulators. Cooperates with pita and su(Hw) to recruit Cp190 and regulate insulator function at the front-ultraabdominal (Fub) boundary. May cooperate with other C2H2 zinc finger proteins, such as M1BP, to recruit CP190 to promoters. May be involved in cellular organization and development of the eye. This chain is Madf and zinc finger protein 1, found in Drosophila melanogaster (Fruit fly).